The primary structure comprises 305 residues: Ribosomal RNA large subunit methyltransferase F (305 aa).

Belongs to the methyltransferase superfamily. METTL16/RlmF family.

Its subcellular location is the cytoplasm. It catalyses the reaction adenosine(1618) in 23S rRNA + S-adenosyl-L-methionine = N(6)-methyladenosine(1618) in 23S rRNA + S-adenosyl-L-homocysteine + H(+). In terms of biological role, specifically methylates the adenine in position 1618 of 23S rRNA. In Enterobacter sp. (strain 638), this protein is Ribosomal RNA large subunit methyltransferase F.